Consider the following 176-residue polypeptide: Disulfide bond formation protein B (176 aa).

Topologically, residues 1 to 14 (MLQFLNRCSKGRGA) are cytoplasmic. Residues 15 to 31 (WLLMALTALVLELVALY) form a helical membrane-spanning segment. At 32-49 (FQHVMLLQPCVMCIYERA) the chain is on the periplasmic side. The cysteines at positions 41 and 44 are disulfide-linked. The helical transmembrane segment at 50 to 65 (ALFGILGASLLGAIAP) threads the bilayer. The Cytoplasmic segment spans residues 66–71 (KSPLRY). Residues 72 to 89 (LAIFIWIYSAWKGVQLAW) traverse the membrane as a helical segment. The Periplasmic portion of the chain corresponds to 90–144 (THTMLQLHPSPFTTCDFFVSFPSWLPLDKWFPAVFVASGDCAVKQWEFLSLEMPQ). A disulfide bond links C104 and C130. A helical membrane pass occupies residues 145–163 (WLVGIFAAYLFIAILVLIS). Residues 164–176 (QFVKPKRRDLFSR) are Cytoplasmic-facing.

Belongs to the DsbB family.

The protein localises to the cell inner membrane. Functionally, required for disulfide bond formation in some periplasmic proteins. Acts by oxidizing the DsbA protein. This chain is Disulfide bond formation protein B, found in Yersinia enterocolitica serotype O:8 / biotype 1B (strain NCTC 13174 / 8081).